Consider the following 1031-residue polypeptide: Error-prone DNA polymerase (1031 aa).

The protein belongs to the DNA polymerase type-C family. DnaE2 subfamily.

The protein resides in the cytoplasm. It catalyses the reaction DNA(n) + a 2'-deoxyribonucleoside 5'-triphosphate = DNA(n+1) + diphosphate. Functionally, DNA polymerase involved in damage-induced mutagenesis and translesion synthesis (TLS). It is not the major replicative DNA polymerase. This Pseudomonas aeruginosa (strain ATCC 15692 / DSM 22644 / CIP 104116 / JCM 14847 / LMG 12228 / 1C / PRS 101 / PAO1) protein is Error-prone DNA polymerase.